The sequence spans 684 residues: NAD(P)H-quinone oxidoreductase subunit 5, chloroplastic (684 aa).

14 consecutive transmembrane segments (helical) span residues 16-36 (WAFP…XLSI), 65-85 (IDPL…MVLI), 96-116 (GYLI…GLVT), 123-143 (IYIF…FWFT), 161-181 (GDFG…SFEF), 206-226 (AALL…HVWL), 234-254 (TPIS…FLVA), 256-276 (LLPL…IGII), 303-323 (LXYM…FHLI), 330-350 (ALLF…VGYS), 372-392 (TSFL…CFWS), 401-421 (WLYS…TAFY), 524-544 (LFPL…GIPF), and 583-603 (IFSV…YKPI).

Belongs to the complex I subunit 5 family. NDH is composed of at least 16 different subunits, 5 of which are encoded in the nucleus.

Its subcellular location is the plastid. It localises to the chloroplast thylakoid membrane. The enzyme catalyses a plastoquinone + NADH + (n+1) H(+)(in) = a plastoquinol + NAD(+) + n H(+)(out). The catalysed reaction is a plastoquinone + NADPH + (n+1) H(+)(in) = a plastoquinol + NADP(+) + n H(+)(out). Functionally, NDH shuttles electrons from NAD(P)H:plastoquinone, via FMN and iron-sulfur (Fe-S) centers, to quinones in the photosynthetic chain and possibly in a chloroplast respiratory chain. The immediate electron acceptor for the enzyme in this species is believed to be plastoquinone. Couples the redox reaction to proton translocation, and thus conserves the redox energy in a proton gradient. The protein is NAD(P)H-quinone oxidoreductase subunit 5, chloroplastic (ndhF) of Sesamum indicum (Oriental sesame).